Reading from the N-terminus, the 593-residue chain is Arginine--tRNA ligase (593 aa).

The 'HIGH' region motif lies at 138–148 (ANPTGPLHVGH).

The protein belongs to the class-I aminoacyl-tRNA synthetase family. Monomer.

It is found in the cytoplasm. It catalyses the reaction tRNA(Arg) + L-arginine + ATP = L-arginyl-tRNA(Arg) + AMP + diphosphate. The polypeptide is Arginine--tRNA ligase (Burkholderia orbicola (strain MC0-3)).